The following is a 149-amino-acid chain: D-aminoacyl-tRNA deacylase (149 aa).

Positions 137–138 match the Gly-cisPro motif, important for rejection of L-amino acids motif; the sequence is GP.

It belongs to the DTD family. In terms of assembly, homodimer.

Its subcellular location is the cytoplasm. The enzyme catalyses glycyl-tRNA(Ala) + H2O = tRNA(Ala) + glycine + H(+). The catalysed reaction is a D-aminoacyl-tRNA + H2O = a tRNA + a D-alpha-amino acid + H(+). Functionally, an aminoacyl-tRNA editing enzyme that deacylates mischarged D-aminoacyl-tRNAs. Also deacylates mischarged glycyl-tRNA(Ala), protecting cells against glycine mischarging by AlaRS. Acts via tRNA-based rather than protein-based catalysis; rejects L-amino acids rather than detecting D-amino acids in the active site. By recycling D-aminoacyl-tRNA to D-amino acids and free tRNA molecules, this enzyme counteracts the toxicity associated with the formation of D-aminoacyl-tRNA entities in vivo and helps enforce protein L-homochirality. The chain is D-aminoacyl-tRNA deacylase from Clostridium botulinum (strain Kyoto / Type A2).